A 414-amino-acid chain; its full sequence is Gamma-glutamyl phosphate reductase (414 aa).

The protein belongs to the gamma-glutamyl phosphate reductase family.

It localises to the cytoplasm. The catalysed reaction is L-glutamate 5-semialdehyde + phosphate + NADP(+) = L-glutamyl 5-phosphate + NADPH + H(+). The protein operates within amino-acid biosynthesis; L-proline biosynthesis; L-glutamate 5-semialdehyde from L-glutamate: step 2/2. Catalyzes the NADPH-dependent reduction of L-glutamate 5-phosphate into L-glutamate 5-semialdehyde and phosphate. The product spontaneously undergoes cyclization to form 1-pyrroline-5-carboxylate. This Xanthomonas campestris pv. campestris (strain 8004) protein is Gamma-glutamyl phosphate reductase.